The primary structure comprises 215 residues: uncharacterized protein (215 aa).

S-adenosyl-L-methionine contacts are provided by glycine 53, glutamate 74, and aspartate 97.

The protein belongs to the methyltransferase superfamily. YrrT family.

Functionally, could be a S-adenosyl-L-methionine-dependent methyltransferase. This is an uncharacterized protein from Geobacillus thermodenitrificans (strain NG80-2).